The primary structure comprises 601 residues: Potassium-transporting ATPase potassium-binding subunit (601 aa).

12 helical membrane-spanning segments follow: residues 3–23 (ASAW…AWPL), 62–82 (HYAL…YALQ), 132–152 (LGLS…AFAL), 179–199 (AWVL…QGVI), 283–303 (LTNL…CFAF), 314–334 (VAIL…VTAA), 367–387 (FGIS…CGAV), 397–417 (LGGM…GGAG), 419–439 (GLYG…LMIG), 459–479 (VAIL…VLAP), 523–543 (VLLA…VLAI), and 564–584 (GPLF…LNYV).

The protein belongs to the KdpA family. In terms of assembly, the system is composed of three essential subunits: KdpA, KdpB and KdpC.

It is found in the cell inner membrane. Its function is as follows. Part of the high-affinity ATP-driven potassium transport (or Kdp) system, which catalyzes the hydrolysis of ATP coupled with the electrogenic transport of potassium into the cytoplasm. This subunit binds the periplasmic potassium ions and delivers the ions to the membrane domain of KdpB through an intramembrane tunnel. In Paracidovorax citrulli (strain AAC00-1) (Acidovorax citrulli), this protein is Potassium-transporting ATPase potassium-binding subunit.